Consider the following 101-residue polypeptide: Protein Tat (101 aa).

Residues 1-10 (MEPVDPRLEP) are compositionally biased toward basic and acidic residues. Positions 1–20 (MEPVDPRLEPWNHPGSQPKT) are disordered. The interval 1–24 (MEPVDPRLEPWNHPGSQPKTACNN) is interaction with human CREBBP. The transactivation stretch occupies residues 1–48 (MEPVDPRLEPWNHPGSQPKTACNNCYCKRCCYHCLYCFTKKGLGISYG). Zn(2+) contacts are provided by cysteine 22, cysteine 25, and cysteine 27. Positions 22–37 (CNNCYCKRCCYHCLYC) are cysteine-rich. Lysine 28 carries the post-translational modification N6-acetyllysine; by host PCAF. Zn(2+)-binding residues include cysteine 30, histidine 33, cysteine 34, and cysteine 37. Residues 38–48 (FTKKGLGISYG) are core. Residues 48 to 58 (GRKKRSQRRRT) show a composition bias toward basic residues. Residues 48 to 101 (GRKKRSQRRRTPQSSKSHQDLIPEQPLSQQQGDQTGQKKQKEALESKTEADPCD) are disordered. A Nuclear localization signal, RNA-binding (TAR), and protein transduction motif is present at residues 49–57 (RKKRSQRRR). Residues 49–86 (RKKRSQRRRTPQSSKSHQDLIPEQPLSQQQGDQTGQKK) are interaction with the host capping enzyme RNGTT. N6-acetyllysine; by host EP300 and GCN5L2 occurs at positions 50 and 51. Arginine 52 carries the asymmetric dimethylarginine; by host PRMT6 modification. The span at 86 to 101 (KQKEALESKTEADPCD) shows a compositional bias: basic and acidic residues.

This sequence belongs to the lentiviruses Tat family. In terms of assembly, interacts with host CCNT1. Associates with the P-TEFb complex composed at least of Tat, P-TEFb (CDK9 and CCNT1), TAR RNA, RNA Pol II. Recruits the HATs CREBBP, TAF1/TFIID, EP300, PCAF and GCN5L2. Interacts with host KAT5/Tip60; this interaction targets the latter to degradation. Interacts with the host deacetylase SIRT1. Interacts with host capping enzyme RNGTT; this interaction stimulates RNGTT. Binds to host KDR, and to the host integrins ITGAV/ITGB3 and ITGA5/ITGB1. Interacts with host KPNB1/importin beta-1 without previous binding to KPNA1/importin alpha-1. Interacts with EIF2AK2. Interacts with host nucleosome assembly protein NAP1L1; this interaction may be required for the transport of Tat within the nucleus, since the two proteins interact at the nuclear rim. Interacts with host C1QBP/SF2P32; this interaction involves lysine-acetylated Tat. Interacts with the host chemokine receptors CCR2, CCR3 and CXCR4. Interacts with host DPP4/CD26; this interaction may trigger an anti-proliferative effect. Interacts with host LDLR. Interacts with the host extracellular matrix metalloproteinase MMP1. Interacts with host PRMT6; this interaction mediates Tat's methylation. Interacts with, and is ubiquitinated by MDM2/Hdm2. Interacts with host PSMC3 and HTATIP2. Interacts with STAB1; this interaction may overcome SATB1-mediated repression of IL2 and IL2RA (interleukin) in T cells by binding to the same domain than HDAC1. Interacts (when acetylated) with human CDK13, thereby increasing HIV-1 mRNA splicing and promoting the production of the doubly spliced HIV-1 protein Nef. Interacts with host TBP; this interaction modulates the activity of transcriptional pre-initiation complex. Interacts with host RELA. Interacts with host PLSCR1; this interaction negatively regulates Tat transactivation activity by altering its subcellular distribution. In terms of processing, asymmetrical arginine methylation by host PRMT6 seems to diminish the transactivation capacity of Tat and affects the interaction with host CCNT1. Acetylation by EP300, CREBBP, GCN5L2/GCN5 and PCAF regulates the transactivation activity of Tat. EP300-mediated acetylation of Lys-50 promotes dissociation of Tat from the TAR RNA through the competitive binding to PCAF's bromodomain. In addition, the non-acetylated Tat's N-terminus can also interact with PCAF. PCAF-mediated acetylation of Lys-28 enhances Tat's binding to CCNT1. Lys-50 is deacetylated by SIRT1. Post-translationally, polyubiquitination by host MDM2 does not target Tat to degradation, but activates its transactivation function and fosters interaction with CCNT1 and TAR RNA. In terms of processing, phosphorylated by EIF2AK2 on serine and threonine residues adjacent to the basic region important for TAR RNA binding and function. Phosphorylation of Tat by EIF2AK2 is dependent on the prior activation of EIF2AK2 by dsRNA.

It localises to the host nucleus. The protein resides in the host nucleolus. The protein localises to the host cytoplasm. Its subcellular location is the secreted. In terms of biological role, transcriptional activator that increases RNA Pol II processivity, thereby increasing the level of full-length viral transcripts. Recognizes a hairpin structure at the 5'-LTR of the nascent viral mRNAs referred to as the transactivation responsive RNA element (TAR) and recruits the cyclin T1-CDK9 complex (P-TEFb complex) that will in turn hyperphosphorylate the RNA polymerase II to allow efficient elongation. The CDK9 component of P-TEFb and other Tat-activated kinases hyperphosphorylate the C-terminus of RNA Pol II that becomes stabilized and much more processive. Other factors such as HTATSF1/Tat-SF1, SUPT5H/SPT5, and HTATIP2 are also important for Tat's function. Besides its effect on RNA Pol II processivity, Tat induces chromatin remodeling of proviral genes by recruiting the histone acetyltransferases (HATs) CREBBP, EP300 and PCAF to the chromatin. This also contributes to the increase in proviral transcription rate, especially when the provirus integrates in transcriptionally silent region of the host genome. To ensure maximal activation of the LTR, Tat mediates nuclear translocation of NF-kappa-B by interacting with host RELA. Through its interaction with host TBP, Tat may also modulate transcription initiation. Tat can reactivate a latently infected cell by penetrating in it and transactivating its LTR promoter. In the cytoplasm, Tat is thought to act as a translational activator of HIV-1 mRNAs. Its function is as follows. Extracellular circulating Tat can be endocytosed by surrounding uninfected cells via the binding to several surface receptors such as CD26, CXCR4, heparan sulfate proteoglycans (HSPG) or LDLR. Neurons are rarely infected, but they internalize Tat via their LDLR. Through its interaction with nuclear HATs, Tat is potentially able to control the acetylation-dependent cellular gene expression. Modulates the expression of many cellular genes involved in cell survival, proliferation or in coding for cytokines or cytokine receptors. Tat plays a role in T-cell and neurons apoptosis. Tat induced neurotoxicity and apoptosis probably contribute to neuroAIDS. Circulating Tat also acts as a chemokine-like and/or growth factor-like molecule that binds to specific receptors on the surface of the cells, affecting many cellular pathways. In the vascular system, Tat binds to ITGAV/ITGB3 and ITGA5/ITGB1 integrins dimers at the surface of endothelial cells and competes with bFGF for heparin-binding sites, leading to an excess of soluble bFGF. In Homo sapiens (Human), this protein is Protein Tat.